A 241-amino-acid chain; its full sequence is 2-C-methyl-D-erythritol 4-phosphate cytidylyltransferase (241 aa).

Belongs to the IspD/TarI cytidylyltransferase family. IspD subfamily.

The enzyme catalyses 2-C-methyl-D-erythritol 4-phosphate + CTP + H(+) = 4-CDP-2-C-methyl-D-erythritol + diphosphate. It functions in the pathway isoprenoid biosynthesis; isopentenyl diphosphate biosynthesis via DXP pathway; isopentenyl diphosphate from 1-deoxy-D-xylulose 5-phosphate: step 2/6. In terms of biological role, catalyzes the formation of 4-diphosphocytidyl-2-C-methyl-D-erythritol from CTP and 2-C-methyl-D-erythritol 4-phosphate (MEP). This Mycobacterium leprae (strain Br4923) protein is 2-C-methyl-D-erythritol 4-phosphate cytidylyltransferase.